The chain runs to 242 residues: Tryptophan synthase alpha chain (242 aa).

Active-site proton acceptor residues include glutamate 31 and aspartate 42.

The protein belongs to the TrpA family. In terms of assembly, tetramer of two alpha and two beta chains.

The catalysed reaction is (1S,2R)-1-C-(indol-3-yl)glycerol 3-phosphate + L-serine = D-glyceraldehyde 3-phosphate + L-tryptophan + H2O. Its pathway is amino-acid biosynthesis; L-tryptophan biosynthesis; L-tryptophan from chorismate: step 5/5. Functionally, the alpha subunit is responsible for the aldol cleavage of indoleglycerol phosphate to indole and glyceraldehyde 3-phosphate. The protein is Tryptophan synthase alpha chain of Staphylococcus aureus (strain USA300).